Here is a 420-residue protein sequence, read N- to C-terminus: D-tagatose-1,6-bisphosphate aldolase subunit GatZ (420 aa).

The protein belongs to the GatZ/KbaZ family. GatZ subfamily. In terms of assembly, forms a complex with GatY.

It participates in carbohydrate metabolism; D-tagatose 6-phosphate degradation; D-glyceraldehyde 3-phosphate and glycerone phosphate from D-tagatose 6-phosphate: step 2/2. In terms of biological role, component of the tagatose-1,6-bisphosphate aldolase GatYZ that is required for full activity and stability of the Y subunit. Could have a chaperone-like function for the proper and stable folding of GatY. When expressed alone, GatZ does not show any aldolase activity. Is involved in the catabolism of galactitol. This Escherichia coli O45:K1 (strain S88 / ExPEC) protein is D-tagatose-1,6-bisphosphate aldolase subunit GatZ.